A 210-amino-acid polypeptide reads, in one-letter code: Na(+)-translocating NADH-quinone reductase subunit D (210 aa).

Transmembrane regions (helical) follow at residues 14–34 (PIVS…ALAV), 42–62 (LVMT…ISIL), 72–92 (IIVQ…VLQA), 103–123 (VFVG…AYAM), 131–151 (FMDG…VGFI), and 178–198 (NGLL…IWII).

It belongs to the NqrDE/RnfAE family. In terms of assembly, composed of six subunits; NqrA, NqrB, NqrC, NqrD, NqrE and NqrF.

The protein resides in the cell inner membrane. It carries out the reaction a ubiquinone + n Na(+)(in) + NADH + H(+) = a ubiquinol + n Na(+)(out) + NAD(+). NQR complex catalyzes the reduction of ubiquinone-1 to ubiquinol by two successive reactions, coupled with the transport of Na(+) ions from the cytoplasm to the periplasm. NqrA to NqrE are probably involved in the second step, the conversion of ubisemiquinone to ubiquinol. The protein is Na(+)-translocating NADH-quinone reductase subunit D of Shewanella halifaxensis (strain HAW-EB4).